The following is a 549-amino-acid chain: Chaperonin GroEL 1 (549 aa).

ATP-binding positions include 30 to 33 (TLGP), lysine 51, 87 to 91 (DGTTT), glycine 415, 479 to 481 (NAA), and aspartate 495.

The protein belongs to the chaperonin (HSP60) family. As to quaternary structure, forms a cylinder of 14 subunits composed of two heptameric rings stacked back-to-back. Interacts with the co-chaperonin GroES.

The protein resides in the cytoplasm. The enzyme catalyses ATP + H2O + a folded polypeptide = ADP + phosphate + an unfolded polypeptide.. Together with its co-chaperonin GroES, plays an essential role in assisting protein folding. The GroEL-GroES system forms a nano-cage that allows encapsulation of the non-native substrate proteins and provides a physical environment optimized to promote and accelerate protein folding. The polypeptide is Chaperonin GroEL 1 (Azoarcus sp. (strain BH72)).